The sequence spans 513 residues: 2,3-bisphosphoglycerate-independent phosphoglycerate mutase (513 aa).

Residues D13 and S63 each coordinate Mn(2+). S63 acts as the Phosphoserine intermediate in catalysis. Substrate contacts are provided by residues H124, R154–D155, R186, R192, R262–R265, and K335. Mn(2+) contacts are provided by D403, H407, D444, H445, and H463.

It belongs to the BPG-independent phosphoglycerate mutase family. Monomer. Mn(2+) serves as cofactor.

It carries out the reaction (2R)-2-phosphoglycerate = (2R)-3-phosphoglycerate. It functions in the pathway carbohydrate degradation; glycolysis; pyruvate from D-glyceraldehyde 3-phosphate: step 3/5. Its function is as follows. Catalyzes the interconversion of 2-phosphoglycerate and 3-phosphoglycerate. This Myxococcus xanthus (strain DK1622) protein is 2,3-bisphosphoglycerate-independent phosphoglycerate mutase.